A 1167-amino-acid polypeptide reads, in one-letter code: Carbamoyl phosphate synthase large chain (1167 aa).

The segment at 1 to 455 is carboxyphosphate synthetic domain; sequence MPRRTDIKSI…SLQKALRGLE (455 aa). Residues R129, R221, G227, G228, E260, V262, E267, G293, V294, H295, Q337, and E351 each coordinate ATP. Residues 184-380 form the ATP-grasp 1 domain; that stretch reads LETRWNLGEG…IAKIAAKLAV (197 aa). 3 residues coordinate Mg(2+): Q337, E351, and N353. Mn(2+)-binding residues include Q337, E351, and N353. Residues 456–619 are oligomerization domain; that stretch reads TGLTGLDEIE…PFAGALANEA (164 aa). Residues 620-1031 are carbamoyl phosphate synthetic domain; the sequence is QVSSRKKVVI…AFAKSQLGAG (412 aa). The ATP-grasp 2 domain maps to 748-960; it reads QKLLHKLGLS…IAKIAARIMA (213 aa). Positions 784, 844, 846, 851, 876, 877, 878, 879, 919, and 931 each coordinate ATP. Residues Q919, E931, and N933 each coordinate Mg(2+). Mn(2+)-binding residues include Q919, E931, and N933. Residues 1032-1167 form the MGS-like domain; that stretch reads VDLPRSGTLF…EVRPLQEYFA (136 aa). Positions 1032 to 1167 are allosteric domain; it reads VDLPRSGTLF…EVRPLQEYFA (136 aa).

This sequence belongs to the CarB family. In terms of assembly, composed of two chains; the small (or glutamine) chain promotes the hydrolysis of glutamine to ammonia, which is used by the large (or ammonia) chain to synthesize carbamoyl phosphate. Tetramer of heterodimers (alpha,beta)4. The cofactor is Mg(2+). Requires Mn(2+) as cofactor.

The enzyme catalyses hydrogencarbonate + L-glutamine + 2 ATP + H2O = carbamoyl phosphate + L-glutamate + 2 ADP + phosphate + 2 H(+). It catalyses the reaction hydrogencarbonate + NH4(+) + 2 ATP = carbamoyl phosphate + 2 ADP + phosphate + 2 H(+). It participates in amino-acid biosynthesis; L-arginine biosynthesis; carbamoyl phosphate from bicarbonate: step 1/1. Its pathway is pyrimidine metabolism; UMP biosynthesis via de novo pathway; (S)-dihydroorotate from bicarbonate: step 1/3. Functionally, large subunit of the glutamine-dependent carbamoyl phosphate synthetase (CPSase). CPSase catalyzes the formation of carbamoyl phosphate from the ammonia moiety of glutamine, carbonate, and phosphate donated by ATP, constituting the first step of 2 biosynthetic pathways, one leading to arginine and/or urea and the other to pyrimidine nucleotides. The large subunit (synthetase) binds the substrates ammonia (free or transferred from glutamine from the small subunit), hydrogencarbonate and ATP and carries out an ATP-coupled ligase reaction, activating hydrogencarbonate by forming carboxy phosphate which reacts with ammonia to form carbamoyl phosphate. This is Carbamoyl phosphate synthase large chain from Mesorhizobium japonicum (strain LMG 29417 / CECT 9101 / MAFF 303099) (Mesorhizobium loti (strain MAFF 303099)).